The sequence spans 156 residues: Putative pre-16S rRNA nuclease (156 aa).

Belongs to the YqgF nuclease family.

It is found in the cytoplasm. In terms of biological role, could be a nuclease involved in processing of the 5'-end of pre-16S rRNA. This Ehrlichia ruminantium (strain Welgevonden) protein is Putative pre-16S rRNA nuclease.